The following is a 452-amino-acid chain: Exodeoxyribonuclease 7 large subunit (452 aa).

This sequence belongs to the XseA family. In terms of assembly, heterooligomer composed of large and small subunits.

It localises to the cytoplasm. The enzyme catalyses Exonucleolytic cleavage in either 5'- to 3'- or 3'- to 5'-direction to yield nucleoside 5'-phosphates.. Bidirectionally degrades single-stranded DNA into large acid-insoluble oligonucleotides, which are then degraded further into small acid-soluble oligonucleotides. This Bacillus thuringiensis (strain Al Hakam) protein is Exodeoxyribonuclease 7 large subunit.